The sequence spans 674 residues: MASTSAATPLKNKRKFENGKKKPKTLKDEFGEKLDIKPVIVPPKPADEYDYDSSDEEDLRNTIGNIPIKWYDDEDHIGYDKFGEKIAKPAKKGEIETFLEKMEDPDYWRKVFDKQTGTDVKLTDEQIEKIHNIATGKYPTIGYNPYEPFLDIFSSQKEIHPIDNRPEPKSRFIPSKDEMRMVSRMVHAIKMGWAKGPRAKKEEHKSYDLWASEDALDNVTKSQLSRMRVHMPAPKVALPTHAESYNPPEEYIFDDEERKKWEEAEKEDRVLNFMPSKYDALRKVPQYDKFITERFERCLDLYLAPRQRKMRIHADPTDLLPDLPNPNDLRPFPTTLAFYMRGHTGQVRAITVEPERGELLASGGEDGTVRIWMIATGRCIKTFQMDGEVTSVSFSPVADRTLLAVAYEGKYVAILNTGCGDRLHVQQTEALLAETPTDAQEDGAVVTWRKSKEKLMLKMPNEVRQVTWHSKGDYFASVAIDDIAKSVYVHQLSKAKSQCPFQKRKGHVQAVTFHPTQARLFVATKIHVREYDLARCVLVKKLITGCKHISTMATDANGENLFLGGLDRRFCWMDLQMGNKPWKKLKHHTAAVRSVAYHKKYPLLATVSDDGTAMVYYARIYTDFVKDNELYPVKRLRAHEKTPNDLCMLHTTWHPTQPWLITAGADGTIALFTY.

Residues methionine 1–aspartate 28 form a disordered region. Over residues lysine 15–aspartate 28 the composition is skewed to basic and acidic residues. WD repeat units lie at residues glycine 342–glutamine 384, aspartate 386–valine 425, glutamine 427–lysine 458, methionine 459–proline 500, lysine 503–lysine 541, histidine 587–lysine 626, and proline 643–tyrosine 674.

The protein belongs to the WD repeat BOP1/ERB1 family.

The protein resides in the nucleus. It is found in the nucleolus. It localises to the nucleoplasm. Its function is as follows. Required for maturation of ribosomal RNAs and formation of the large ribosomal subunit. The protein is Ribosome biogenesis protein BOP1 homolog of Caenorhabditis elegans.